Reading from the N-terminus, the 331-residue chain is Tetraacyldisaccharide 4'-kinase (331 aa).

Thr60–Thr67 serves as a coordination point for ATP.

This sequence belongs to the LpxK family.

The catalysed reaction is a lipid A disaccharide + ATP = a lipid IVA + ADP + H(+). The protein operates within glycolipid biosynthesis; lipid IV(A) biosynthesis; lipid IV(A) from (3R)-3-hydroxytetradecanoyl-[acyl-carrier-protein] and UDP-N-acetyl-alpha-D-glucosamine: step 6/6. In terms of biological role, transfers the gamma-phosphate of ATP to the 4'-position of a tetraacyldisaccharide 1-phosphate intermediate (termed DS-1-P) to form tetraacyldisaccharide 1,4'-bis-phosphate (lipid IVA). The polypeptide is Tetraacyldisaccharide 4'-kinase (Pseudomonas syringae pv. tomato (strain ATCC BAA-871 / DC3000)).